Consider the following 90-residue polypeptide: Small ribosomal subunit protein bS20 (90 aa).

Belongs to the bacterial ribosomal protein bS20 family.

Its function is as follows. Binds directly to 16S ribosomal RNA. The sequence is that of Small ribosomal subunit protein bS20 from Roseiflexus sp. (strain RS-1).